Reading from the N-terminus, the 324-residue chain is Acetyl-coenzyme A carboxylase carboxyl transferase subunit alpha (324 aa).

One can recognise a CoA carboxyltransferase C-terminal domain in the interval 37 to 291; the sequence is ILEDKLENLE…DLMIRKTFEQ (255 aa).

This sequence belongs to the AccA family. Acetyl-CoA carboxylase is a heterohexamer composed of biotin carboxyl carrier protein (AccB), biotin carboxylase (AccC) and two subunits each of ACCase subunit alpha (AccA) and ACCase subunit beta (AccD).

The protein localises to the cytoplasm. It catalyses the reaction N(6)-carboxybiotinyl-L-lysyl-[protein] + acetyl-CoA = N(6)-biotinyl-L-lysyl-[protein] + malonyl-CoA. It participates in lipid metabolism; malonyl-CoA biosynthesis; malonyl-CoA from acetyl-CoA: step 1/1. Component of the acetyl coenzyme A carboxylase (ACC) complex. First, biotin carboxylase catalyzes the carboxylation of biotin on its carrier protein (BCCP) and then the CO(2) group is transferred by the carboxyltransferase to acetyl-CoA to form malonyl-CoA. In Bacillus cereus (strain G9842), this protein is Acetyl-coenzyme A carboxylase carboxyl transferase subunit alpha.